We begin with the raw amino-acid sequence, 157 residues long: Transcriptional repressor NrdR (157 aa).

Residues 3–34 (CPFCRHPDSRVVDSRTSDDGLSIRRRRQCPEC) fold into a zinc finger. The region spanning 46 to 136 (LSVIKRNGVV…VYQGFDSLDD (91 aa)) is the ATP-cone domain.

It belongs to the NrdR family. Requires Zn(2+) as cofactor.

Functionally, negatively regulates transcription of bacterial ribonucleotide reductase nrd genes and operons by binding to NrdR-boxes. The protein is Transcriptional repressor NrdR of Clavibacter michiganensis subsp. michiganensis (strain NCPPB 382).